A 149-amino-acid chain; its full sequence is Cell division protein SepF (149 aa).

This sequence belongs to the SepF family. As to quaternary structure, homodimer. Interacts with FtsZ.

It is found in the cytoplasm. In terms of biological role, cell division protein that is part of the divisome complex and is recruited early to the Z-ring. Probably stimulates Z-ring formation, perhaps through the cross-linking of FtsZ protofilaments. Its function overlaps with FtsA. This Clostridium perfringens (strain ATCC 13124 / DSM 756 / JCM 1290 / NCIMB 6125 / NCTC 8237 / Type A) protein is Cell division protein SepF.